A 212-amino-acid chain; its full sequence is uncharacterized protein (212 aa).

An N-terminal signal peptide occupies residues 1–18 (MQLTQVLAVAILAAGVSA). Residues 108–180 (VSHNRVNAKQ…KDYGHKDYGH (73 aa)) are disordered. Over residues 117–180 (QRRDDKKDYG…KDYGHKDYGH (64 aa)) the composition is skewed to basic and acidic residues. The 15 X 5 AA tandem repeats of K-D-Y-G-H stretch occupies residues 120–210 (DDKKDYGKND…KDYGYKGYDD (91 aa)). Copy 1 of the repeat occupies 123 to 127 (KDYGK). One copy of the 2; truncated repeat lies at 128–132 (NDYGK). 3 tandem repeats follow at residues 133–137 (KDYGK), 138–142 (KDYGK), and 143–147 (KDYGK). The 6; truncated repeat unit spans residues 148 to 152 (KEYDP). A run of 5 repeats spans residues 166-170 (KDYGH), 171-175 (KDYGH), 176-180 (KDYGH), 181-185 (KDYGH), and 186-190 (KDYGH). The 12; truncated repeat unit spans residues 191–195 (DDYGY). One copy of the 13; truncated repeat lies at 196–200 (KGYDD). A 14; truncated repeat occupies 201 to 205 (KDYGY). The 15; truncated repeat unit spans residues 206-210 (KGYDD).

Its subcellular location is the secreted. This is an uncharacterized protein from Arthroderma benhamiae (strain ATCC MYA-4681 / CBS 112371) (Trichophyton mentagrophytes).